The sequence spans 775 residues: Zinc finger protein GLIS3 (775 aa).

Disordered regions lie at residues 121–147 (TESSHSPYPSPRHSSTRSHSARSKKRA) and 282–314 (PGSTVDLPPAPPLPPLPPPPGPPPPYHAHAHLH). Residues 123–133 (SSHSPYPSPRH) show a composition bias toward low complexity. Residues 134-147 (SSTRSHSARSKKRA) are compositionally biased toward basic residues. Residues 289–307 (PPAPPLPPLPPPPGPPPPY) are compositionally biased toward pro residues. The C2H2-type 1 zinc-finger motif lies at 345–370 (HCCRWIDCSALYDQQEELVRHIEKVH). The C2H2-type 2; atypical zinc finger occupies 379–406 (FTCFWAGCPRRYKPFNARYKLLIHMRVH). 3 consecutive C2H2-type zinc fingers follow at residues 412–436 (NKCTFEGCEKAFSRLENLKIHLRSH), 442–466 (YLCQHPGCQKAFSNSSDRAKHQRTH), and 472–496 (YACQIPGCTKRYTDPSSLRKHVKAH). Disordered stretches follow at residues 485-512 (DPSSLRKHVKAHSSKEQQARKKLRSSTE) and 529-665 (PATS…QPNG). A Bipartite nuclear localization signal motif is present at residues 491–507 (KHVKAHSSKEQQARKKL). Basic and acidic residues predominate over residues 497 to 512 (SSKEQQARKKLRSSTE). Polar residues-rich tracts occupy residues 557–567 (IFSSNYSSRSG), 588–600 (VQGSPHNPSSQLP), and 632–663 (SILQRTQPPYTQQPSGSHLKSYQPETNSSFQP).

It belongs to the GLI C2H2-type zinc-finger protein family. In terms of tissue distribution, in the adult, expressed at high levels in the kidney and at lower levels in the brain, skeletal muscle, pancreas, liver, lung, thymus and ovary.

The protein resides in the nucleus. Functionally, acts both as a repressor and an activator of transcription. Binds to the consensus sequence 5'-GACCACCCAC-3'. This chain is Zinc finger protein GLIS3 (GLIS3), found in Homo sapiens (Human).